Here is a 157-residue protein sequence, read N- to C-terminus: Nucleoside deoxyribosyltransferase (157 aa).

The active-site Nucleophile is the glutamate 98.

The protein belongs to the nucleoside deoxyribosyltransferase family. In terms of assembly, homohexamer.

The catalysed reaction is 2-deoxy-D-ribosyl-base(1) + base(2) = 2-deoxy-D-ribosyl-base(2) + base(1).. It participates in nucleotide metabolism; nucleotide salvage pathway. In terms of biological role, catalyzes the cleavage of the glycosidic bond of 2'-deoxyribonucleosides and the transfer of the deoxyribosyl moiety to an acceptor purine or pyrimidine base. In Lactobacillus leichmannii, this protein is Nucleoside deoxyribosyltransferase (ntd).